The sequence spans 475 residues: Aspartyl/glutamyl-tRNA(Asn/Gln) amidotransferase subunit B (475 aa).

It belongs to the GatB/GatE family. GatB subfamily. As to quaternary structure, heterotrimer of A, B and C subunits.

It carries out the reaction L-glutamyl-tRNA(Gln) + L-glutamine + ATP + H2O = L-glutaminyl-tRNA(Gln) + L-glutamate + ADP + phosphate + H(+). It catalyses the reaction L-aspartyl-tRNA(Asn) + L-glutamine + ATP + H2O = L-asparaginyl-tRNA(Asn) + L-glutamate + ADP + phosphate + 2 H(+). Functionally, allows the formation of correctly charged Asn-tRNA(Asn) or Gln-tRNA(Gln) through the transamidation of misacylated Asp-tRNA(Asn) or Glu-tRNA(Gln) in organisms which lack either or both of asparaginyl-tRNA or glutaminyl-tRNA synthetases. The reaction takes place in the presence of glutamine and ATP through an activated phospho-Asp-tRNA(Asn) or phospho-Glu-tRNA(Gln). This is Aspartyl/glutamyl-tRNA(Asn/Gln) amidotransferase subunit B from Clostridium novyi (strain NT).